We begin with the raw amino-acid sequence, 478 residues long: ATP-dependent RNA helicase DDX19A (478 aa).

An N-acetylalanine modification is found at Ala-2. Residues 2-299 are N-terminal lobe; the sequence is ATDSWALAVD…DPNVIKLKRE (298 aa). Lys-26 is covalently cross-linked (Glycyl lysine isopeptide (Lys-Gly) (interchain with G-Cter in SUMO1); alternate). Residue Lys-26 forms a Glycyl lysine isopeptide (Lys-Gly) (interchain with G-Cter in SUMO2); alternate linkage. Thr-42 carries the phosphothreonine modification. Positions 54 to 67 are N-terminal helix; sequence DRAAQSLLNKLIRS. The short motif at 91-119 is the Q motif element; sequence KSFEELRLKPQLLQGVYAMGFNRPSKIQE. Residues Gln-118 and 137–144 contribute to the ATP site; that span reads SQSGTGKT. Residues 124–294 enclose the Helicase ATP-binding domain; the sequence is MMLAEPPQNL…QKVVPDPNVI (171 aa). A DEAD box motif is present at residues 241–244; sequence DEAD. A C-terminal lobe region spans residues 300-478; it reads EETLDTIKQY…DLDEIEKIAN (179 aa). The Helicase C-terminal domain occupies 305–473; it reads TIKQYYVLCS…RLDTDDLDEI (169 aa). ATP is bound by residues Arg-428 and Arg-431.

The protein belongs to the DEAD box helicase family. DDX19/DBP5 subfamily.

The protein resides in the cytoplasm. It is found in the nucleus. It localises to the nucleoplasm. It catalyses the reaction ATP + H2O = ADP + phosphate + H(+). Functionally, ATP-dependent RNA helicase involved in mRNA export from the nucleus. Rather than unwinding RNA duplexes, DDX19 functions as a remodeler of ribonucleoprotein particles, whereby proteins bound to nuclear mRNA are dissociated and replaced by cytoplasmic mRNA binding proteins. In Homo sapiens (Human), this protein is ATP-dependent RNA helicase DDX19A (DDX19A).